The sequence spans 772 residues: Protein U58 (772 aa).

This sequence belongs to the herpesviridae UL87 family.

In Human herpesvirus 6B (strain Z29) (HHV-6 variant B), this protein is Protein U58 (U58).